A 340-amino-acid chain; its full sequence is Photosystem II protein D1 (340 aa).

The next 3 helical transmembrane spans lie at 25–42 (YIGW…LATV), 114–129 (HFFL…EWEF), and 138–152 (WIFV…AAAA). H114 serves as a coordination point for chlorophyll a. W122 serves as a coordination point for pheophytin a. Residues D166 and E185 each contribute to the [CaMn4O5] cluster site. Residues 193 to 214 (FHILGVAGVFGGSLFSAMHGSL) form a helical membrane-spanning segment. H194 serves as a coordination point for chlorophyll a. A quinone is bound by residues H211 and 260–261 (SF). Residue H211 participates in Fe cation binding. Fe cation is bound at residue H268. A helical transmembrane segment spans residues 270 to 284 (FLAAWPVIGIWITSL). Residues H328, E329, D338, and A340 each contribute to the [CaMn4O5] cluster site.

The protein belongs to the reaction center PufL/M/PsbA/D family. In terms of assembly, PSII is composed of 1 copy each of membrane proteins PsbA, PsbB, PsbC, PsbD, PsbE, PsbF, PsbH, PsbI, PsbJ, PsbK, PsbL, PsbM, PsbT, PsbX, PsbY, PsbZ, Psb30/Ycf12, at least 3 peripheral proteins of the oxygen-evolving complex and a large number of cofactors. It forms dimeric complexes. Requires The D1/D2 heterodimer binds P680, chlorophylls that are the primary electron donor of PSII, and subsequent electron acceptors. It shares a non-heme iron and each subunit binds pheophytin, quinone, additional chlorophylls, carotenoids and lipids. D1 provides most of the ligands for the Mn4-Ca-O5 cluster of the oxygen-evolving complex (OEC). There is also a Cl(-1) ion associated with D1 and D2, which is required for oxygen evolution. The PSII complex binds additional chlorophylls, carotenoids and specific lipids. as cofactor. In terms of processing, tyr-157 forms a radical intermediate that is referred to as redox-active TyrZ, YZ or Y-Z.

The protein resides in the plastid. The protein localises to the chloroplast thylakoid membrane. It carries out the reaction 2 a plastoquinone + 4 hnu + 2 H2O = 2 a plastoquinol + O2. Its function is as follows. Photosystem II (PSII) is a light-driven water:plastoquinone oxidoreductase that uses light energy to abstract electrons from H(2)O, generating O(2) and a proton gradient subsequently used for ATP formation. It consists of a core antenna complex that captures photons, and an electron transfer chain that converts photonic excitation into a charge separation. The D1/D2 (PsbA/PsbD) reaction center heterodimer binds P680, the primary electron donor of PSII as well as several subsequent electron acceptors. This Amphidinium carterae (Dinoflagellate) protein is Photosystem II protein D1.